The primary structure comprises 98 residues: Defensin-A (98 aa).

A signal peptide spans 1 to 18 (MKSITVICFLALCTVAIT). Positions 19 to 58 (SAYPQEPVLADEARPFANSLFDELPEETYQAAVENFRLKR) are excised as a propeptide. Cystine bridges form between Cys61-Cys88, Cys74-Cys94, and Cys78-Cys96.

Belongs to the invertebrate defensin family. Type 1 subfamily.

It localises to the secreted. Its function is as follows. Antibacterial peptide mostly active against Gram-positive bacteria. Has activity against the bacteria Gram-negative E.cloacae beta12. The polypeptide is Defensin-A (DEFA) (Aedes aegypti (Yellowfever mosquito)).